Reading from the N-terminus, the 345-residue chain is Glycerol-3-phosphate dehydrogenase [NAD(P)+] (345 aa).

NADPH-binding residues include Ser-23, Tyr-24, His-44, and Lys-118. Positions 118, 147, and 149 each coordinate sn-glycerol 3-phosphate. Residue Ala-151 participates in NADPH binding. 5 residues coordinate sn-glycerol 3-phosphate: Lys-203, Asp-256, Ser-266, Arg-267, and Asn-268. The Proton acceptor role is filled by Lys-203. An NADPH-binding site is contributed by Arg-267. Positions 291 and 293 each coordinate NADPH.

The protein belongs to the NAD-dependent glycerol-3-phosphate dehydrogenase family.

It is found in the cytoplasm. The enzyme catalyses sn-glycerol 3-phosphate + NAD(+) = dihydroxyacetone phosphate + NADH + H(+). It carries out the reaction sn-glycerol 3-phosphate + NADP(+) = dihydroxyacetone phosphate + NADPH + H(+). Its pathway is membrane lipid metabolism; glycerophospholipid metabolism. In terms of biological role, catalyzes the reduction of the glycolytic intermediate dihydroxyacetone phosphate (DHAP) to sn-glycerol 3-phosphate (G3P), the key precursor for phospholipid synthesis. The polypeptide is Glycerol-3-phosphate dehydrogenase [NAD(P)+] (Vibrio campbellii (strain ATCC BAA-1116)).